We begin with the raw amino-acid sequence, 353 residues long: Outer membrane protein P5 (353 aa).

Positions Met1–Ala21 are cleaved as a signal peptide. The next 8 beta stranded transmembrane spans lie at Thr27–Ala37, Ser58–Ile69, Leu77–Asp85, His104–Glu115, Leu120–Val128, Gly158–Ala167, Leu172–Gln179, and Ser205–Arg213. Residues Val227–Lys353 enclose the OmpA-like domain. Residues Cys326 and Cys338 are joined by a disulfide bond.

The protein belongs to the outer membrane OOP (TC 1.B.6) superfamily. OmpA family. Monomer and homodimer.

It is found in the cell outer membrane. Functionally, with TolR probably plays a role in maintaining the position of the peptidoglycan cell wall in the periplasm. Acts as a porin with low permeability that allows slow penetration of small solutes; an internal gate slows down solute passage. In terms of biological role, reconstitution in planar bilayers with lithium dodecyl sulfate-solublized P5 yields narrow pores (58 pS conductance) with a low probability of opening, whereas n-octyl-bD-glucopyranoside-solubilized P5 forms large pores (1.1 nS conductance) with high open probability. The large pore easily converts to the smaller pore at room temperature; at 42 degrees Celsius the smaller pore converts to the larger one. This is Outer membrane protein P5 from Haemophilus influenzae (strain ATCC 51907 / DSM 11121 / KW20 / Rd).